The primary structure comprises 582 residues: MESVKQRILAPGKEGIKNFAGKSLGQIYRVLEKKQDNRETIELTEDGKPLEVPEKKAPLCDCTCFGLPRRYIIAIMSGLGFCISFGIRCNLGVAIVDMVNNSTIHRGGKVIKEKAKFNWDPETVGMIHGSFFWGYIITQIPGGYIASRLAANRVFGAAILLTSTLNMLIPSAARVHYGCVIFVRILQGLVEGVTYPACHGIWSKWAPPLERSRLATTSFCGSYAGAVIAMPLAGILVQYTGWSSVFYVYGSFGMVWYMFWLLVSYESPAKHPTITDEERRYIEESIGESANLLGAMEKFKTPWRKFFTSMPVYAIIVANFCRSWTFYLLLISQPAYFEEVFGFEISKVGMLSAVPHLVMTIIVPIGGQIADFLRSKQILSTTTVRKIMNCGGFGMEATLLLVVGYSHTRGVAISFLVLAVGFSGFAISGFNVNHLDIAPRYASILMGISDGVGTLSGMVCPIIVGAMTKNKSREEWQYVFLIAALVHYGGVIFYALFASGEKQPWADPEETSEEKCGFIHEDELDEETGDITQNYINYGTTKSYGATSQENGGWPNGWEKKEEFVQEGAQDAYTYKDRDDYS.

Residues 1-71 (MESVKQRILA…CTCFGLPRRY (71 aa)) are Cytoplasmic-facing. A helical transmembrane segment spans residues 72–92 (IIAIMSGLGFCISFGIRCNLG). The Vesicular portion of the chain corresponds to 93-125 (VAIVDMVNNSTIHRGGKVIKEKAKFNWDPETVG). Residues Asn100 and Asn101 are each glycosylated (N-linked (GlcNAc...) asparagine). Residues 126 to 146 (MIHGSFFWGYIITQIPGGYIA) traverse the membrane as a helical segment. Topologically, residues 147–148 (SR) are cytoplasmic. Residues 149-169 (LAANRVFGAAILLTSTLNMLI) traverse the membrane as a helical segment. At 170–177 (PSAARVHY) the chain is on the vesicular side. A helical transmembrane segment spans residues 178–198 (GCVIFVRILQGLVEGVTYPAC). Topologically, residues 199–216 (HGIWSKWAPPLERSRLAT) are cytoplasmic. The helical transmembrane segment at 217–237 (TSFCGSYAGAVIAMPLAGILV) threads the bilayer. Residues 238–244 (QYTGWSS) lie on the Vesicular side of the membrane. The helical transmembrane segment at 245-265 (VFYVYGSFGMVWYMFWLLVSY) threads the bilayer. The Cytoplasmic portion of the chain corresponds to 266–310 (ESPAKHPTITDEERRYIEESIGESANLLGAMEKFKTPWRKFFTSM). Residues 311 to 331 (PVYAIIVANFCRSWTFYLLLI) traverse the membrane as a helical segment. Residues 332 to 349 (SQPAYFEEVFGFEISKVG) are Vesicular-facing. Residues 350 to 370 (MLSAVPHLVMTIIVPIGGQIA) form a helical membrane-spanning segment. Residues 371-386 (DFLRSKQILSTTTVRK) are Cytoplasmic-facing. The chain crosses the membrane as a helical span at residues 387–407 (IMNCGGFGMEATLLLVVGYSH). The Vesicular segment spans residues 408–409 (TR). A helical membrane pass occupies residues 410 to 430 (GVAISFLVLAVGFSGFAISGF). Residues 431-443 (NVNHLDIAPRYAS) are Cytoplasmic-facing. A helical membrane pass occupies residues 444–464 (ILMGISDGVGTLSGMVCPIIV). Residues 465 to 477 (GAMTKNKSREEWQ) lie on the Vesicular side of the membrane. Asn470 carries an N-linked (GlcNAc...) asparagine glycan. Residues 478–498 (YVFLIAALVHYGGVIFYALFA) traverse the membrane as a helical segment. At 499 to 582 (SGEKQPWADP…YTYKDRDDYS (84 aa)) the chain is on the cytoplasmic side.

The protein belongs to the major facilitator superfamily. Sodium/anion cotransporter family. VGLUT subfamily. As to expression, expressed in brain. Expressed in hippocampal neurons (at protein level).

It localises to the cytoplasmic vesicle. The protein resides in the secretory vesicle. It is found in the synaptic vesicle membrane. The protein localises to the synapse. Its subcellular location is the synaptosome. It localises to the cell membrane. It carries out the reaction L-glutamate(out) = L-glutamate(in). It catalyses the reaction K(+)(in) + H(+)(out) = K(+)(out) + H(+)(in). The enzyme catalyses 3 Na(+)(out) + phosphate(out) = 3 Na(+)(in) + phosphate(in). The catalysed reaction is phosphate(in) = phosphate(out). It carries out the reaction chloride(in) = chloride(out). Chloride channel activity is allosterically activated by lumenal H(+) and Cl(-) leading to synaptic vesicles acidification. The L-glutamate transport activity is allosterically activated by lumenal H(+) and Cl(-). The allosteric requirement for H(+) efficiently prevents non-vesicular efflux across the plasma membrane. The L-glutamate uniporter activity exhibits a biphasic dependence on chloride concentration. Multifunctional transporter that transports L-glutamate as well as multiple ions such as chloride, proton, potassium, sodium and phosphate. At the synaptic vesicle membrane, mainly functions as a uniporter which transports preferentially L-glutamate but also, phosphate from the cytoplasm into synaptic vesicles at presynaptic nerve terminals of excitatory neural cells. The L-glutamate or phosphate uniporter activity is electrogenic and is driven by the proton electrochemical gradient, mainly by the electrical gradient established by the vacuolar H(+)-ATPase across the synaptic vesicle membrane. In addition, functions as a chloride channel that allows a chloride permeation through the synaptic vesicle membrane therefore affects the proton electrochemical gradient and promotes synaptic vesicles acidification. Moreover, functions as a vesicular K(+)/H(+) antiport allowing to maintain the electrical gradient and to decrease chemical gradient and therefore sustain vesicular glutamate uptake. The vesicular H(+)/H(+) antiport activity is electroneutral. At the plasma membrane, following exocytosis, functions as a symporter of Na(+) and phosphate from the extracellular space to the cytoplasm allowing synaptic phosphate homeostasis regulation. The symporter activity is driven by an inside negative membrane potential and is electrogenic. Also involved in the regulation of retinal hyaloid vessel regression during postnatal development. May also play a role in the endocrine glutamatergic system of other tissues such as pineal gland and pancreas. The sequence is that of Vesicular glutamate transporter 2 from Mus musculus (Mouse).